Consider the following 439-residue polypeptide: Ribosomal protein uS12 methylthiotransferase RimO (439 aa).

In terms of domain architecture, MTTase N-terminal spans 3–115 (NKLHIVSLGC…IDELLVEKKS (113 aa)). C12, C46, C78, C146, C150, and C153 together coordinate [4Fe-4S] cluster. The 230-residue stretch at 132–361 (TGSTYHAYIK…GKIAADVMQA (230 aa)) folds into the Radical SAM core domain.

The protein belongs to the methylthiotransferase family. RimO subfamily. It depends on [4Fe-4S] cluster as a cofactor.

It is found in the cytoplasm. It catalyses the reaction L-aspartate(89)-[ribosomal protein uS12]-hydrogen + (sulfur carrier)-SH + AH2 + 2 S-adenosyl-L-methionine = 3-methylsulfanyl-L-aspartate(89)-[ribosomal protein uS12]-hydrogen + (sulfur carrier)-H + 5'-deoxyadenosine + L-methionine + A + S-adenosyl-L-homocysteine + 2 H(+). Functionally, catalyzes the methylthiolation of an aspartic acid residue of ribosomal protein uS12. In Sulfurimonas denitrificans (strain ATCC 33889 / DSM 1251) (Thiomicrospira denitrificans (strain ATCC 33889 / DSM 1251)), this protein is Ribosomal protein uS12 methylthiotransferase RimO.